The chain runs to 308 residues: UDP-N-acetylenolpyruvoylglucosamine reductase (308 aa).

One can recognise an FAD-binding PCMH-type domain in the interval 24 to 187; sequence RVGGPADWLF…VSASLQGVPG (164 aa). Residue R167 is part of the active site. Residues 199–230 are disordered; sequence QLDKRDQTQPTKERSAGSTFRNPAGFSSTGRA. The segment covering 200-213 has biased composition (basic and acidic residues); sequence LDKRDQTQPTKERS. A compositionally biased stretch (polar residues) spans 214 to 228; the sequence is AGSTFRNPAGFSSTG. The active-site Proton donor is the S216. E298 is a catalytic residue.

It belongs to the MurB family. FAD is required as a cofactor.

The protein resides in the cytoplasm. It catalyses the reaction UDP-N-acetyl-alpha-D-muramate + NADP(+) = UDP-N-acetyl-3-O-(1-carboxyvinyl)-alpha-D-glucosamine + NADPH + H(+). Its pathway is cell wall biogenesis; peptidoglycan biosynthesis. Cell wall formation. This chain is UDP-N-acetylenolpyruvoylglucosamine reductase, found in Ruegeria pomeroyi (strain ATCC 700808 / DSM 15171 / DSS-3) (Silicibacter pomeroyi).